Reading from the N-terminus, the 478-residue chain is tRNA (adenine(58)-N(1))-methyltransferase non-catalytic subunit TRM6 (478 aa).

The segment at 456-478 (SENATAADSSEKLAEHGAKKQKI) is disordered. Residues 464-478 (SSEKLAEHGAKKQKI) are compositionally biased toward basic and acidic residues.

This sequence belongs to the TRM6/GCD10 family. Heterotetramer; composed of two copies of TRM6/GCD10 and two copies of TRM61/GCD14.

Its subcellular location is the nucleus. In terms of biological role, substrate-binding subunit of tRNA (adenine-N(1)-)-methyltransferase, which catalyzes the formation of N(1)-methyladenine at position 58 (m1A58) in initiator methionyl-tRNA. Also required for repression of GCN4 mRNA translation by the upstream open reading frames (uORFs) under conditions of amino acid sufficiency. The polypeptide is tRNA (adenine(58)-N(1))-methyltransferase non-catalytic subunit TRM6 (GCD10) (Saccharomyces cerevisiae (strain ATCC 204508 / S288c) (Baker's yeast)).